We begin with the raw amino-acid sequence, 251 residues long: Tryptophan synthase alpha chain (251 aa).

Catalysis depends on proton acceptor residues E36 and D47.

The protein belongs to the TrpA family. In terms of assembly, tetramer of two alpha and two beta chains.

It carries out the reaction (1S,2R)-1-C-(indol-3-yl)glycerol 3-phosphate + L-serine = D-glyceraldehyde 3-phosphate + L-tryptophan + H2O. It participates in amino-acid biosynthesis; L-tryptophan biosynthesis; L-tryptophan from chorismate: step 5/5. Functionally, the alpha subunit is responsible for the aldol cleavage of indoleglycerol phosphate to indole and glyceraldehyde 3-phosphate. The sequence is that of Tryptophan synthase alpha chain from Thermococcus kodakarensis (strain ATCC BAA-918 / JCM 12380 / KOD1) (Pyrococcus kodakaraensis (strain KOD1)).